The following is a 294-amino-acid chain: Thymidylate synthase (294 aa).

DUMP-binding positions include arginine 30 and 156-157 (RR). Cysteine 176 functions as the Nucleophile in the catalytic mechanism. DUMP is bound by residues 196 to 199 (RSGD), asparagine 207, and 237 to 239 (HVY). Aspartate 199 provides a ligand contact to (6R)-5,10-methylene-5,6,7,8-tetrahydrofolate. (6R)-5,10-methylene-5,6,7,8-tetrahydrofolate is bound at residue alanine 293.

The protein belongs to the thymidylate synthase family. Homodimer.

The enzyme catalyses dUMP + (6R)-5,10-methylene-5,6,7,8-tetrahydrofolate = 7,8-dihydrofolate + dTMP. The protein operates within pyrimidine metabolism; dTTP biosynthesis. This Ascaris suum (Pig roundworm) protein is Thymidylate synthase.